The primary structure comprises 201 residues: ATP-dependent Clp protease proteolytic subunit (201 aa).

The active-site Nucleophile is the serine 98. Histidine 123 is a catalytic residue.

The protein belongs to the peptidase S14 family. In terms of assembly, fourteen ClpP subunits assemble into 2 heptameric rings which stack back to back to give a disk-like structure with a central cavity, resembling the structure of eukaryotic proteasomes.

It localises to the cytoplasm. The enzyme catalyses Hydrolysis of proteins to small peptides in the presence of ATP and magnesium. alpha-casein is the usual test substrate. In the absence of ATP, only oligopeptides shorter than five residues are hydrolyzed (such as succinyl-Leu-Tyr-|-NHMec, and Leu-Tyr-Leu-|-Tyr-Trp, in which cleavage of the -Tyr-|-Leu- and -Tyr-|-Trp bonds also occurs).. In terms of biological role, cleaves peptides in various proteins in a process that requires ATP hydrolysis. Has a chymotrypsin-like activity. Plays a major role in the degradation of misfolded proteins. This Rickettsia typhi (strain ATCC VR-144 / Wilmington) protein is ATP-dependent Clp protease proteolytic subunit.